Consider the following 206-residue polypeptide: Thymidylate kinase (206 aa).

10-17 is a binding site for ATP; that stretch reads GVDGVGKT.

Belongs to the thymidylate kinase family.

The enzyme catalyses dTMP + ATP = dTDP + ADP. Phosphorylation of dTMP to form dTDP in both de novo and salvage pathways of dTTP synthesis. This is Thymidylate kinase from Bifidobacterium longum (strain NCC 2705).